The following is a 38-amino-acid chain: Mu/omega-theraphotoxin-Mb1b (38 aa).

Intrachain disulfides connect Cys7–Cys21, Cys14–Cys26, and Cys20–Cys33. Serine amide is present on Ser38.

This sequence belongs to the neurotoxin 10 (Hwtx-1) family. 28 (Jztx-11) subfamily. In terms of tissue distribution, expressed by the venom gland.

It localises to the secreted. Its function is as follows. Paralytic toxin on insects that inhibits voltage-gated sodium (Nav) and calcium (Cav) channels in P.americana (American cockroach) dorsal unpaired median (DUM) neurons, and also inhibits the B.germanica (German cockroach) Nav channel (BgNaV1). May act as a gating-modifier toxin on Nav and as a pore blocker on Cav. In vivo, reversibly paralyzes both L.cuprina (Australian sheep blowfly) and M.domestica (housefly), but does not affect larvae of H.armigera (cotton bollworms). The protein is Mu/omega-theraphotoxin-Mb1b of Monocentropus balfouri (Socotra Island blue baboon tarantula).